We begin with the raw amino-acid sequence, 314 residues long: Probable dimethyladenosine transferase (314 aa).

Residues His-36, Leu-38, Gly-63, Glu-84, Asp-112, and Asn-127 each coordinate S-adenosyl-L-methionine.

This sequence belongs to the class I-like SAM-binding methyltransferase superfamily. rRNA adenine N(6)-methyltransferase family. Part of the small subunit (SSU) processome, composed of more than 70 proteins and the RNA chaperone small nucleolar RNA (snoRNA) U3.

It localises to the nucleus. The protein resides in the nucleoplasm. Its subcellular location is the nucleolus. The catalysed reaction is adenosine(1779)/adenosine(1780) in 18S rRNA + 4 S-adenosyl-L-methionine = N(6)-dimethyladenosine(1779)/N(6)-dimethyladenosine(1780) in 18S rRNA + 4 S-adenosyl-L-homocysteine + 4 H(+). Specifically dimethylates two adjacent adenosines in the loop of a conserved hairpin near the 3'-end of 18S rRNA in the 40S particle. Involved in the pre-rRNA processing steps leading to small-subunit rRNA production independently of its RNA-modifying catalytic activity. Part of the small subunit (SSU) processome, first precursor of the small eukaryotic ribosomal subunit. During the assembly of the SSU processome in the nucleolus, many ribosome biogenesis factors, an RNA chaperone and ribosomal proteins associate with the nascent pre-rRNA and work in concert to generate RNA folding, modifications, rearrangements and cleavage as well as targeted degradation of pre-ribosomal RNA by the RNA exosome. In Dictyostelium discoideum (Social amoeba), this protein is Probable dimethyladenosine transferase (dimt1).